A 265-amino-acid chain; its full sequence is Deoxyguanosine kinase, mitochondrial (265 aa).

32–40 (GNIAVGKST) provides a ligand contact to ATP. E57, Y88, Q99, and R106 together coordinate substrate. E129 acts as the Proton acceptor in catalysis. Substrate is bound by residues R130 and D135. Residue 190 to 194 (RLQRR) participates in ATP binding. Substrate is bound at residue E199. 242-244 (EDF) is a binding site for ATP.

Belongs to the DCK/DGK family. In terms of assembly, homodimer.

The protein resides in the mitochondrion. The enzyme catalyses 2'-deoxyguanosine + ATP = dGMP + ADP + H(+). Functionally, phosphorylates deoxyguanosine in the mitochondrial matrix with high efficiency but shows very low activity against other deoxynucleosides. This chain is Deoxyguanosine kinase, mitochondrial, found in Xenopus laevis (African clawed frog).